We begin with the raw amino-acid sequence, 227 residues long: Thymidine kinase 1 (227 aa).

Residues 15 to 22, 47 to 49, and 91 to 94 each bind ATP; these read GPMFSGKT, DTR, and DEGQ. Glutamate 92 serves as the catalytic Proton acceptor. Residue phenylalanine 122 coordinates substrate. Cysteine 147 and cysteine 150 together coordinate Zn(2+). Residues 166-170 and tyrosine 175 contribute to the substrate site; that span reads IELIG. Cysteine 179 and cysteine 182 together coordinate Zn(2+). The segment covering 187 to 196 has biased composition (polar residues); the sequence is QNEGNSTKPS. Positions 187–227 are disordered; it reads QNEGNSTKPSKTARHSHSQSAPSVAPLAVNINPDDHLNNDY.

The protein belongs to the thymidine kinase family. In terms of assembly, interacts with calmodulin in the presence of Ca(2+).

It carries out the reaction thymidine + ATP = dTMP + ADP + H(+). This Dictyostelium discoideum (Social amoeba) protein is Thymidine kinase 1.